We begin with the raw amino-acid sequence, 1067 residues long: Probable importin subunit beta-4 (1067 aa).

Residues 27–94 (ATRALETKYL…RSNLLDITLK (68 aa)) enclose the Importin N-terminal domain. HEAT repeat units lie at residues 159–196 (KLLLDFVNLFSQTITDSSRTVRVTSVQGLGAIAEVLES), 379–416 (GNLPNIFPIIINGLCDNDMDVRQAALLALSQIAVEIPT), 420–457 (KHHAQLLPLVFELMSTQGVKVGKSACNCIDALLEGLDK), 591–633 (PFLE…SVET), 890–927 (PFTRDVFSLFMAALEDSEGEVRSNAAYSMGLLCQFSTE), and 1013–1050 (QHLGELIPVFASVLTGSPEQLNDELRSELLSMVKEIAP).

Belongs to the importin beta family.

The protein resides in the cytoplasm. The protein localises to the nucleus. It is found in the nucleus envelope. In terms of biological role, required for nuclear protein import, its predominant substrate seems to be ribosomal proteins. Binds to nucleoporins and the GTP-bound form of gsp1 (Ran). This is Probable importin subunit beta-4 (kap123) from Schizosaccharomyces pombe (strain 972 / ATCC 24843) (Fission yeast).